A 48-amino-acid chain; its full sequence is Cytochrome b559 subunit beta (48 aa).

The chain crosses the membrane as a helical span at residues Trp-23–Ala-39. His-27 contributes to the heme binding site.

It belongs to the PsbE/PsbF family. In terms of assembly, heterodimer of an alpha subunit and a beta subunit. PSII is composed of 1 copy each of membrane proteins PsbA, PsbB, PsbC, PsbD, PsbE, PsbF, PsbH, PsbI, PsbJ, PsbK, PsbL, PsbM, PsbT, PsbX, PsbY, Psb30/Ycf12, peripheral proteins PsbO, CyanoQ (PsbQ), PsbU, PsbV and a large number of cofactors. It forms dimeric complexes. Requires heme b as cofactor.

The protein localises to the cellular thylakoid membrane. Functionally, this b-type cytochrome is tightly associated with the reaction center of photosystem II (PSII). PSII is a light-driven water:plastoquinone oxidoreductase that uses light energy to abstract electrons from H(2)O, generating O(2) and a proton gradient subsequently used for ATP formation. It consists of a core antenna complex that captures photons, and an electron transfer chain that converts photonic excitation into a charge separation. This chain is Cytochrome b559 subunit beta, found in Prochlorococcus marinus (strain SARG / CCMP1375 / SS120).